Here is a 33-residue protein sequence, read N- to C-terminus: uncharacterized protein (33 aa).

Residues 11-31 (LALVIYMSVVLLLMVGVPLLF) form a helical membrane-spanning segment.

It localises to the membrane. This is an uncharacterized protein from Saccharomyces cerevisiae (strain ATCC 204508 / S288c) (Baker's yeast).